Consider the following 310-residue polypeptide: Repression factor of MSEs protein 1 (310 aa).

Disordered regions lie at residues 83–155 (TQEV…EANA) and 192–230 (DGIR…DEGE). Low complexity predominate over residues 92-106 (RNTSSSSSSTRSNSS). Residues 107 to 120 (ADISDTEYSGENTP) are compositionally biased toward polar residues. The segment covering 127-136 (SRRRRTRSRA) has biased composition (basic residues). Over residues 139–155 (RENSLPASLPSISEANA) the composition is skewed to polar residues. Residues 192–208 (DGIRRRSSRISERDKRR) show a composition bias toward basic and acidic residues. Ser-215 carries the post-translational modification Phosphoserine.

Interacts directly with HST1 and SUM1. Required for the interaction between HST1 and SUM1.

The protein resides in the nucleus. In terms of biological role, tethering factor required for histone deacetylase HST1-mediated repression. Probably involved in targeting HST1 to a subset of SUM1-regulated genes. This Saccharomyces cerevisiae (strain ATCC 204508 / S288c) (Baker's yeast) protein is Repression factor of MSEs protein 1 (RFM1).